Consider the following 272-residue polypeptide: Ribosome maturation factor RimP (272 aa).

The interval 209–272 (QNLGILPPPP…RGDIDPPEGD (64 aa)) is disordered. A compositionally biased stretch (basic and acidic residues) spans 250 to 266 (NTKEHRLAAERLRRGDI).

Belongs to the RimP family.

It is found in the cytoplasm. In terms of biological role, required for maturation of 30S ribosomal subunits. This Rhodopseudomonas palustris (strain BisA53) protein is Ribosome maturation factor RimP.